A 216-amino-acid polypeptide reads, in one-letter code: Glycerol-3-phosphate acyltransferase 3 (216 aa).

5 helical membrane passes run 6–26 (LLLVVIVSYILGSIPFGYLVS), 58–78 (LVASLDVIKGASAVAFAGLVI), 92–112 (LLFAQVLAGLAAVAGHIWPVF), 125–145 (FGGMIALCPVAAIFGGEVLII), and 158–178 (ITGVVGAYALLVPLTLISGFP).

The protein belongs to the PlsY family. In terms of assembly, probably interacts with PlsX.

It localises to the cell membrane. The catalysed reaction is an acyl phosphate + sn-glycerol 3-phosphate = a 1-acyl-sn-glycero-3-phosphate + phosphate. Its pathway is lipid metabolism; phospholipid metabolism. Functionally, catalyzes the transfer of an acyl group from acyl-phosphate (acyl-PO(4)) to glycerol-3-phosphate (G3P) to form lysophosphatidic acid (LPA). This enzyme utilizes acyl-phosphate as fatty acyl donor, but not acyl-CoA or acyl-ACP. This is Glycerol-3-phosphate acyltransferase 3 from Dehalococcoides mccartyi (strain CBDB1).